Consider the following 121-residue polypeptide: Large ribosomal subunit protein bL12 (121 aa).

This sequence belongs to the bacterial ribosomal protein bL12 family. Homodimer. Part of the ribosomal stalk of the 50S ribosomal subunit. Forms a multimeric L10(L12)X complex, where L10 forms an elongated spine to which 2 to 4 L12 dimers bind in a sequential fashion. Binds GTP-bound translation factors.

Forms part of the ribosomal stalk which helps the ribosome interact with GTP-bound translation factors. Is thus essential for accurate translation. This chain is Large ribosomal subunit protein bL12, found in Streptococcus pyogenes serotype M3 (strain ATCC BAA-595 / MGAS315).